Consider the following 691-residue polypeptide: DNA ligase (691 aa).

NAD(+)-binding positions include aspartate 41–aspartate 45, serine 90–leucine 91, and glutamate 130. The active-site N6-AMP-lysine intermediate is lysine 132. NAD(+)-binding residues include arginine 153, glutamate 190, lysine 307, and lysine 331. Zn(2+)-binding residues include cysteine 425, cysteine 428, cysteine 443, and cysteine 449. One can recognise a BRCT domain in the interval alanine 610–arginine 691.

It belongs to the NAD-dependent DNA ligase family. LigA subfamily. Mg(2+) serves as cofactor. Mn(2+) is required as a cofactor.

The enzyme catalyses NAD(+) + (deoxyribonucleotide)n-3'-hydroxyl + 5'-phospho-(deoxyribonucleotide)m = (deoxyribonucleotide)n+m + AMP + beta-nicotinamide D-nucleotide.. DNA ligase that catalyzes the formation of phosphodiester linkages between 5'-phosphoryl and 3'-hydroxyl groups in double-stranded DNA using NAD as a coenzyme and as the energy source for the reaction. It is essential for DNA replication and repair of damaged DNA. This Burkholderia thailandensis (strain ATCC 700388 / DSM 13276 / CCUG 48851 / CIP 106301 / E264) protein is DNA ligase.